The following is a 364-amino-acid chain: MSVMVVRKKVTRKWEKLPGRNTFCCDGRVMMARQKGIFYLTLFLILGTCTLFFAFECRYLAVQLSPAIPVFAAMLFLFSMATLLRTSFSDPGVIPRALPDEAAFIEMEIEATNGAVPQGQRPPPRIKNFQINNQIVKLKYCYTCKIFRPPRASHCSICDNCVERFDHHCPWVGNCVGKRNYRYFYLFILSLSLLTIYVFAFNIVYVALKSLKIGFLETLKETPGTVLEVLICFFTLWSVVGLTGFHTFLVALNQTTNEDIKGSWTGKNRVQNPYSHGNIVKNCCEVLCGPLPPSVLDRRGILPLEESGSRPPSTQETSSSLLPQSPAPTEHLNSNEMPEDSSTPEEMPPPEPPEPPQEAAEAEK.

Over 1 to 35 (MSVMVVRKKVTRKWEKLPGRNTFCCDGRVMMARQK) the chain is Cytoplasmic. Residues 36-56 (GIFYLTLFLILGTCTLFFAFE) traverse the membrane as a helical segment. The Lumenal portion of the chain corresponds to 57 to 63 (CRYLAVQ). Residues 64 to 84 (LSPAIPVFAAMLFLFSMATLL) form a helical membrane-spanning segment. The Cytoplasmic portion of the chain corresponds to 85–183 (RTSFSDPGVI…NCVGKRNYRY (99 aa)). The region spanning 139–189 (KYCYTCKIFRPPRASHCSICDNCVERFDHHCPWVGNCVGKRNYRYFYLFIL) is the DHHC domain. Catalysis depends on C169, which acts as the S-palmitoyl cysteine intermediate. A helical membrane pass occupies residues 184–204 (FYLFILSLSLLTIYVFAFNIV). The Lumenal portion of the chain corresponds to 205–228 (YVALKSLKIGFLETLKETPGTVLE). The chain crosses the membrane as a helical span at residues 229 to 249 (VLICFFTLWSVVGLTGFHTFL). Residues 250–364 (VALNQTTNED…PPQEAAEAEK (115 aa)) lie on the Cytoplasmic side of the membrane. The interval 303–364 (PLEESGSRPP…PPQEAAEAEK (62 aa)) is disordered. Over residues 310 to 323 (RPPSTQETSSSLLP) the composition is skewed to polar residues. Residues 346–356 (EMPPPEPPEPP) show a composition bias toward pro residues.

The protein belongs to the DHHC palmitoyltransferase family. ERF2/ZDHHC9 subfamily. As to quaternary structure, interacts with GOLGA7. As to expression, highly expressed in kidney, skeletal muscle, brain, lung and liver. Absent in thymus, spleen and leukocytes.

It is found in the endoplasmic reticulum membrane. Its subcellular location is the golgi apparatus membrane. The enzyme catalyses L-cysteinyl-[protein] + hexadecanoyl-CoA = S-hexadecanoyl-L-cysteinyl-[protein] + CoA. Functionally, palmitoyltransferase that catalyzes the addition of palmitate onto various protein substrates, such as ADRB2, GSDMD, HRAS, NRAS and CGAS. The ZDHHC9-GOLGA7 complex is a palmitoyltransferase specific for HRAS and NRAS. May have a palmitoyltransferase activity toward the beta-2 adrenergic receptor/ADRB2 and therefore regulate G protein-coupled receptor signaling. Acts as a regulator of innate immunity by catalyzing palmitoylation of CGAS, thereby promoting CGAS homodimerization and cyclic GMP-AMP synthase activity. Activates pyroptosis by catalyzing palmitoylation of gasdermin-D (GSDMD), thereby promoting membrane translocation and pore formation of GSDMD. In terms of biological role, (Microbial infection) Through a sequential action with ZDHHC20, rapidly and efficiently palmitoylates SARS coronavirus-2/SARS-CoV-2 spike protein following its synthesis in the endoplasmic reticulum (ER). In the infected cell, promotes spike biogenesis by protecting it from premature ER degradation, increases half-life and controls the lipid organization of its immediate membrane environment. Once the virus has formed, spike palmitoylation controls fusion with the target cell. The polypeptide is Palmitoyltransferase ZDHHC9 (Homo sapiens (Human)).